Here is a 500-residue protein sequence, read N- to C-terminus: Glycerol kinase (500 aa).

Thr16 is a binding site for ADP. Positions 16 and 17 each coordinate ATP. Position 16 (Thr16) interacts with sn-glycerol 3-phosphate. Arg20 is an ADP binding site. Sn-glycerol 3-phosphate contacts are provided by Arg86, Glu87, Tyr138, and Asp247. The glycerol site is built by Arg86, Glu87, Tyr138, Asp247, and Gln248. ADP contacts are provided by Thr269 and Gly312. Residues Thr269, Gly312, Gln316, and Gly413 each coordinate ATP. Positions 413 and 417 each coordinate ADP.

It belongs to the FGGY kinase family.

The enzyme catalyses glycerol + ATP = sn-glycerol 3-phosphate + ADP + H(+). It participates in polyol metabolism; glycerol degradation via glycerol kinase pathway; sn-glycerol 3-phosphate from glycerol: step 1/1. With respect to regulation, inhibited by fructose 1,6-bisphosphate (FBP). Key enzyme in the regulation of glycerol uptake and metabolism. Catalyzes the phosphorylation of glycerol to yield sn-glycerol 3-phosphate. This Rippkaea orientalis (strain PCC 8801 / RF-1) (Cyanothece sp. (strain PCC 8801)) protein is Glycerol kinase.